Reading from the N-terminus, the 346-residue chain is Probable dual-specificity RNA methyltransferase RlmN (346 aa).

Glutamate 91 functions as the Proton acceptor in the catalytic mechanism. The 229-residue stretch at 97–325 (TEKRLTVCVS…VSVRYSKGLE (229 aa)) folds into the Radical SAM core domain. A disulfide bridge links cysteine 104 with cysteine 330. The [4Fe-4S] cluster site is built by cysteine 111, cysteine 115, and cysteine 118. S-adenosyl-L-methionine-binding positions include 158–159 (GE), serine 188, 211–213 (SLH), and asparagine 287. The active-site S-methylcysteine intermediate is cysteine 330.

This sequence belongs to the radical SAM superfamily. RlmN family. It depends on [4Fe-4S] cluster as a cofactor.

The protein localises to the cytoplasm. The enzyme catalyses adenosine(2503) in 23S rRNA + 2 reduced [2Fe-2S]-[ferredoxin] + 2 S-adenosyl-L-methionine = 2-methyladenosine(2503) in 23S rRNA + 5'-deoxyadenosine + L-methionine + 2 oxidized [2Fe-2S]-[ferredoxin] + S-adenosyl-L-homocysteine. It carries out the reaction adenosine(37) in tRNA + 2 reduced [2Fe-2S]-[ferredoxin] + 2 S-adenosyl-L-methionine = 2-methyladenosine(37) in tRNA + 5'-deoxyadenosine + L-methionine + 2 oxidized [2Fe-2S]-[ferredoxin] + S-adenosyl-L-homocysteine. Functionally, specifically methylates position 2 of adenine 2503 in 23S rRNA and position 2 of adenine 37 in tRNAs. This chain is Probable dual-specificity RNA methyltransferase RlmN, found in Picosynechococcus sp. (strain ATCC 27264 / PCC 7002 / PR-6) (Agmenellum quadruplicatum).